The primary structure comprises 162 residues: Protein hcp1 (162 aa).

This sequence belongs to the hcp1 family. In terms of assembly, hexamer. Three hcp1 monomers form two closely related hexameric rings with a 40 Angstrom internal diameter.

The protein localises to the secreted. Required for assembly of the protein secretion apparatus HSI-I. Actively secreted during chronic infection of cystic fibrosis patients. The protein is Protein hcp1 (hcp1) of Pseudomonas aeruginosa (strain ATCC 15692 / DSM 22644 / CIP 104116 / JCM 14847 / LMG 12228 / 1C / PRS 101 / PAO1).